The following is a 387-amino-acid chain: Cytochrome b (387 aa).

A helical membrane pass occupies residues 32–52 (LGSLLGLCLVIQIASGVFLAM). His-82 and His-96 together coordinate heme b. Transmembrane regions (helical) follow at residues 85–105 (GASF…YYGS), 116–136 (IGVV…CLVY), 151–171 (LSAI…GFSV), 179–199 (FFAL…MHLM), 225–245 (FIFK…LFVF), 289–309 (LGGV…PYTD), 324–344 (LAFY…QLHV), and 350–370 (QLGQ…VPVI). Residues His-183 and His-197 each coordinate heme b.

The protein belongs to the cytochrome b family. In terms of assembly, component of the ubiquinol-cytochrome c oxidoreductase (cytochrome b-c1 complex, complex III, CIII), a multisubunit enzyme composed of 10 subunits. The complex is composed of 3 respiratory subunits cytochrome b (COB), cytochrome c1 (CYT1) and Rieske protein (RIP1), 2 core protein subunits COR1 and QCR2, and 5 low-molecular weight protein subunits QCR6, QCR7, QCR8, QCR9 and QCR10. The complex exists as an obligatory dimer and forms supercomplexes (SCs) in the inner mitochondrial membrane with a monomer or a dimer of cytochrome c oxidase (complex IV, CIV), resulting in 2 different assemblies (supercomplexes III(2)IV and III(2)IV(2)). Requires heme b as cofactor.

The protein resides in the mitochondrion inner membrane. Functionally, component of the ubiquinol-cytochrome c oxidoreductase, a multisubunit transmembrane complex that is part of the mitochondrial electron transport chain which drives oxidative phosphorylation. The complex plays an important role in the uptake of multiple carbon sources present in different host niches. The polypeptide is Cytochrome b (Candida albicans (strain SC5314 / ATCC MYA-2876) (Yeast)).